A 370-amino-acid chain; its full sequence is Actin-related protein 2/3 complex subunit 1A (370 aa).

WD repeat units follow at residues 6 to 45 (FLLE…WVKA), 50 to 89 (EHNG…WKPT), 140 to 179 (PIRS…VDEK), 202 to 241 (GTGG…QVST), 244 to 284 (TEFL…TFVS), and 322 to 365 (LHQN…SSIQ).

It belongs to the WD repeat ARPC1 family. As to quaternary structure, probable component of the Arp2/3 complex in which it may replace ARPC1B. In addition to its role in the cytoplasmic cytoskeleton, the Arp2/3 complex also promotes actin polymerization in the nucleus, thereby regulating gene transcription and repair of damaged DNA.

The protein resides in the cytoplasm. It is found in the cytoskeleton. Its subcellular location is the nucleus. Functionally, probably functions as a component of the Arp2/3 complex which is involved in regulation of actin polymerization and together with an activating nucleation-promoting factor (NPF) mediates the formation of branched actin networks. This is Actin-related protein 2/3 complex subunit 1A (ARPC1A) from Homo sapiens (Human).